The chain runs to 293 residues: Neugrin (293 aa).

Positions methionine 1–alanine 15 are cleaved as a signal peptide. Disordered stretches follow at residues glutamine 25 to arginine 48 and proline 162 to lysine 211. A Phosphoserine modification is found at serine 41. Asparagine 270 carries an N-linked (GlcNAc...) asparagine glycan.

The protein belongs to the neugrin family. Forms a regulatory protein-RNA complex, consisting of RCC1L, NGRN, RPUSD3, RPUSD4, TRUB2, FASTKD2 and 16S mt-rRNA. Interacts with 16S mt-rRNA; this interaction is direct.

Its subcellular location is the nucleus. The protein resides in the secreted. It is found in the mitochondrion membrane. In terms of biological role, plays an essential role in mitochondrial ribosome biogenesis. As a component of a functional protein-RNA module, consisting of RCC1L, NGRN, RPUSD3, RPUSD4, TRUB2, FASTKD2 and 16S mitochondrial ribosomal RNA (16S mt-rRNA), controls 16S mt-rRNA abundance and is required for intra-mitochondrial translation of core subunits of the oxidative phosphorylation system. The protein is Neugrin (Ngrn) of Rattus norvegicus (Rat).